A 1151-amino-acid chain; its full sequence is Nardilysin (1151 aa).

The signal sequence occupies residues 1-20 (MLRRVTVAAVCATRRKLCEA). Disordered stretches follow at residues 53–108 (RNKA…KSPS) and 133–207 (MEGK…KKTT). 3 positions are modified to phosphoserine: S86, S94, and S96. Positions 141-198 (TDDEEEEEVEEEEEDDDEDSGAEIEDDDEEGFDDEDEFDDEHDDDLDTEDNELEELEE) are enriched in acidic residues. H233 lines the Zn(2+) pocket. E236 serves as the catalytic Proton acceptor. Positions 237 and 314 each coordinate Zn(2+).

This sequence belongs to the peptidase M16 family. As to quaternary structure, interacts with BACE1 and NRG1. It depends on Zn(2+) as a cofactor. Primarily in adult heart, skeletal muscle, and testis and at much lower levels in other tissues.

It is found in the mitochondrion. The protein resides in the cell projection. It localises to the dendrite. The catalysed reaction is Hydrolysis of polypeptides, preferably at -Xaa-|-Arg-Lys-, and less commonly at -Arg-|-Arg-Xaa-, in which Xaa is not Arg or Lys.. Functionally, cleaves peptide substrates on the N-terminus of arginine residues in dibasic pairs. Is a critical activator of BACE1- and ADAM17-mediated pro-neuregulin ectodomain shedding, involved in the positive regulation of axonal maturation and myelination. Required for proper functioning of 2-oxoglutarate dehydrogenase (OGDH). The sequence is that of Nardilysin from Homo sapiens (Human).